A 338-amino-acid polypeptide reads, in one-letter code: UPF0324 membrane protein TauZ (338 aa).

The next 10 membrane-spanning stretches (helical) occupy residues 12–31 (IEAA…TAQF), 36–55 (YGAP…NFLA), 75–92 (LGVA…LAAL), 96–118 (AIAL…SRLV), 125–147 (ALLT…AAVL), 162–184 (LSVT…FFGF), 191–213 (VFLG…IGPE), 223–245 (LIRV…ARGL), 258–280 (PGFV…PAAV), and 315–337 (AIAL…LHVL).

This sequence belongs to the UPF0324 family.

The protein resides in the cell membrane. This chain is UPF0324 membrane protein TauZ (tauZ), found in Paracoccus denitrificans.